The following is a 131-amino-acid chain: Small ribosomal subunit protein uS8 (131 aa).

It belongs to the universal ribosomal protein uS8 family. As to quaternary structure, part of the 30S ribosomal subunit. Contacts proteins S5 and S12.

Its function is as follows. One of the primary rRNA binding proteins, it binds directly to 16S rRNA central domain where it helps coordinate assembly of the platform of the 30S subunit. This is Small ribosomal subunit protein uS8 from Blochmanniella pennsylvanica (strain BPEN).